The following is a 443-amino-acid chain: MKSSLSLCQRAANAASKYERYVPSCGVFPLGFKVGSIATGVKKNGQLDLGVILSTYEREGGATAAAVFTTNKFKAAPVVASKERLAKSEGRGISAIVVNSGCANAVTGAVGLENANKVVQLVEQQLGRKDTTLLMSTGVIGQHLSMDKIEHGLGTLLNNDDAFGNDFSSWLSLSKAMMTTDTFPKLISSRFTLPGGTTYTLTGISKGAGMICPNMATLLGFIGTDLPISPSALQNILSSAVDRSFNCISVDGDMSTNDTIYMLASGAIDTDLITESSESFPLIKAQVTELAQNLAQLVVRDGEGSTKFVTVHVKRALNFADAKVIAKTISNSSLVKCALYGQDANWGRILCAIGYAQLGDCASLDESTLNVSFVGVGDSKGAELNLVVDGVPNVNINESKAATMLADTDLKIVVDLGTGTEECNFWTCDLSHEYISINADYRS.

Substrate is bound by residues threonine 179, lysine 206, threonine 217, glutamate 303, asparagine 438, and serine 443. The Nucleophile role is filled by threonine 217.

The protein belongs to the ArgJ family. As to quaternary structure, heterodimer of an alpha and a beta chain. In terms of processing, the alpha and beta chains are autoproteolytically processed from a single precursor protein within the mitochondrion.

The protein resides in the mitochondrion matrix. It carries out the reaction N(2)-acetyl-L-ornithine + L-glutamate = N-acetyl-L-glutamate + L-ornithine. The enzyme catalyses L-glutamate + acetyl-CoA = N-acetyl-L-glutamate + CoA + H(+). It functions in the pathway amino-acid biosynthesis; L-arginine biosynthesis; L-ornithine and N-acetyl-L-glutamate from L-glutamate and N(2)-acetyl-L-ornithine (cyclic): step 1/1. It participates in amino-acid biosynthesis; L-arginine biosynthesis; N(2)-acetyl-L-ornithine from L-glutamate: step 1/4. Functionally, catalyzes two activities which are involved in the cyclic version of arginine biosynthesis: the synthesis of acetylglutamate from glutamate and acetyl-CoA, and of ornithine by transacetylation between acetylornithine and glutamate. This chain is Arginine biosynthesis bifunctional protein ArgJ, mitochondrial, found in Eremothecium gossypii (strain ATCC 10895 / CBS 109.51 / FGSC 9923 / NRRL Y-1056) (Yeast).